A 120-amino-acid chain; its full sequence is NAD(P)H-quinone oxidoreductase subunit 3, chloroplastic (120 aa).

3 consecutive transmembrane segments (helical) span residues 9 to 29 (IFWT…WISG), 64 to 84 (MFAL…PWAM), and 88 to 108 (VLGV…VVGL).

The protein belongs to the complex I subunit 3 family. In terms of assembly, NDH is composed of at least 16 different subunits, 5 of which are encoded in the nucleus.

The protein localises to the plastid. The protein resides in the chloroplast thylakoid membrane. It carries out the reaction a plastoquinone + NADH + (n+1) H(+)(in) = a plastoquinol + NAD(+) + n H(+)(out). The catalysed reaction is a plastoquinone + NADPH + (n+1) H(+)(in) = a plastoquinol + NADP(+) + n H(+)(out). In terms of biological role, NDH shuttles electrons from NAD(P)H:plastoquinone, via FMN and iron-sulfur (Fe-S) centers, to quinones in the photosynthetic chain and possibly in a chloroplast respiratory chain. The immediate electron acceptor for the enzyme in this species is believed to be plastoquinone. Couples the redox reaction to proton translocation, and thus conserves the redox energy in a proton gradient. The protein is NAD(P)H-quinone oxidoreductase subunit 3, chloroplastic of Brachypodium distachyon (Purple false brome).